A 335-amino-acid polypeptide reads, in one-letter code: SLAM family member 7 (335 aa).

Residues 1 to 22 (MAGSPTCLTLIYILWQLTGSAA) form the signal peptide. The 102-residue stretch at 23–124 (SGPVKELVGS…PSTQEYVLHV (102 aa)) folds into the Ig-like V-type domain. Topologically, residues 23–226 (SGPVKELVGS…GAADDPDSSM (204 aa)) are extracellular. N-linked (GlcNAc...) asparagine glycosylation is found at asparagine 98, asparagine 142, asparagine 148, asparagine 172, asparagine 176, and asparagine 204. The 76-residue stretch at 131–206 (PKVTMGLQSN…ARNPVSRNFS (76 aa)) folds into the Ig-like C2-type domain. 2 cysteine pairs are disulfide-bonded: cysteine 145–cysteine 215 and cysteine 151–cysteine 195. The helical transmembrane segment at 227 to 247 (VLLCLLLVPLLLSLFVLGLFL) threads the bilayer. Over 248–335 (WFLKRERQEE…PRLFAYENVI (88 aa)) the chain is Cytoplasmic. The interval 278–296 (SGENTEYDTIPHTNRTILK) is interaction with FYN when phosphorylated at Tyr-284. The ITSM signature appears at 302 to 307 (TVYSTV).

Isoform 1 binds to SH2D1A when its cytoplasmic tail is phosphorylated in the presence of FYN (in vitro); low affinity binding, the physiological relevance of the interaction is questioned. Interacts with SH2D1B; in NK cells. Interacts (via ITSM phosphorylated on Tyr-302) with SH2D1B, PTPN6/SHP-1, PTPN11/SHP-2, INPP5D/SHIP1, CSK and FYN. As to expression, expressed in spleen, lymph node, peripheral blood leukocytes, bone marrow, small intestine, stomach, appendix, lung and trachea. Expression was detected in NK cells, activated B-cells, NK-cell line but not in promyelocytic, B-, or T-cell lines. Expressed in monocytes. Isoform 3 is expressed at much lower level than isoform 1.

Its subcellular location is the membrane. In terms of biological role, self-ligand receptor of the signaling lymphocytic activation molecule (SLAM) family. SLAM receptors triggered by homo- or heterotypic cell-cell interactions are modulating the activation and differentiation of a wide variety of immune cells and thus are involved in the regulation and interconnection of both innate and adaptive immune response. Activities are controlled by presence or absence of small cytoplasmic adapter proteins, SH2D1A/SAP and/or SH2D1B/EAT-2. Isoform 1 mediates NK cell activation through a SH2D1A-independent extracellular signal-regulated ERK-mediated pathway. Positively regulates NK cell functions by a mechanism dependent on phosphorylated SH2D1B. Downstream signaling implicates PLCG1, PLCG2 and PI3K. In addition to heterotypic NK cells-target cells interactions also homotypic interactions between NK cells may contribute to activation. However, in the absence of SH2D1B, inhibits NK cell function. Also acts inhibitory in T-cells. May play a role in lymphocyte adhesion. In LPS-activated monocytes negatively regulates production of pro-inflammatory cytokines. Functionally, isoform 3 does not mediate any NK cell activation. This chain is SLAM family member 7 (SLAMF7), found in Homo sapiens (Human).